The sequence spans 183 residues: MTEMKILIVTLTYIEKSIIDEIVNNLSSYGLEVDILFDSRKYLPISAFNWERLQYDAEKVLSFLKSKYDFNYDSIIFLADSDGYIDGYNFVFGLTIDNFAIIFLNRLREEFYNRKPDLELFMKRVVKEVTHEAGHILGLGHCNTIGCVMNFSNTVEDVDKKQARFCKNCIYKIENLSKYLQRK.

A Zn(2+)-binding site is contributed by histidine 131. The active-site Proton acceptor is glutamate 132. Positions 135, 141, 142, 147, 166, and 169 each coordinate Zn(2+).

Belongs to the peptidase M54 family. Monomer. It depends on Zn(2+) as a cofactor.

In terms of biological role, probable zinc metalloprotease whose natural substrate is unknown. This Saccharolobus islandicus (strain Y.N.15.51 / Yellowstone #2) (Sulfolobus islandicus) protein is Archaemetzincin.